Here is a 701-residue protein sequence, read N- to C-terminus: MSALKDVDQLTEAEARAEHARLAREIAGHDKAYYQSDAPKISDAAYDALRRKLEAIEVRFPQFIDLLSPTQRVGAVPSGKFGEIRHAVPMLSLGNAFNDEDVADFVGRIRRFLGLAESDVVAVTAEPKIDGLSASLRYVGGKLVHGATRGDGQTGEDVTQNLLTLDDIPDTLPPGDWPDVVEVRGEVYMSHADFAALNERQIEAGKDAYKNPRNAAAGSLRQIDPKMTSQRPLRFFAYAWGEVSEPLSDTQMGAVARFGEMGFPVNDLMARCETVEALLAVYRDIEARRAGLGYDIDGVVYKADRLDWQERLGFVARAPRWAIAHKFPAEQATTILEAIDIQVGRTGALTPVARLTPVTVGGVVVTNATLHNQDEIERKDIRVGDTVVIQRAGDVIPQVVRVVDPDRPGRGEAFDFPTECPVCGSQALREHDAKTGKLDVVRRCTGGLICGAQLKERLKHFVSRKAFDIEGLGIKQIEAFQEEGLITEPAHIFTLKARNEAGEIKPPLQEREGFGETSIRNLFTSIEDRRTITLARFLNALGIRHVGENTSALFARTYGSWAAFHAAAANLSDEAVRAEMLGIDGIGNAAVEALEQYFTEAHNRDLLDRLVAQLTIEDAEAIANDSPVAGKTVVFTGALERMTRDEAKAKAQALGAKVAGSVSGKTDYLVAGPGAGSKAKKAAELGVETLTEDEWFDLIGA.

NAD(+) is bound by residues 43-47 (DAAYD), 92-93 (SL), and E126. Catalysis depends on K128, which acts as the N6-AMP-lysine intermediate. R149, E186, K302, and K326 together coordinate NAD(+). Zn(2+)-binding residues include C420, C423, C444, and C450. The BRCT domain maps to 623–701 (ANDSPVAGKT…EDEWFDLIGA (79 aa)).

This sequence belongs to the NAD-dependent DNA ligase family. LigA subfamily. It depends on Mg(2+) as a cofactor. Mn(2+) is required as a cofactor.

The enzyme catalyses NAD(+) + (deoxyribonucleotide)n-3'-hydroxyl + 5'-phospho-(deoxyribonucleotide)m = (deoxyribonucleotide)n+m + AMP + beta-nicotinamide D-nucleotide.. Its function is as follows. DNA ligase that catalyzes the formation of phosphodiester linkages between 5'-phosphoryl and 3'-hydroxyl groups in double-stranded DNA using NAD as a coenzyme and as the energy source for the reaction. It is essential for DNA replication and repair of damaged DNA. The sequence is that of DNA ligase from Maricaulis maris (strain MCS10) (Caulobacter maris).